Reading from the N-terminus, the 281-residue chain is Protoheme IX farnesyltransferase (281 aa).

9 consecutive transmembrane segments (helical) span residues 13–33, 38–58, 85–105, 107–127, 132–152, 161–181, 206–226, 227–247, and 261–281; these read VIWL…GPLV, LIEL…FNMY, ALTF…LWLG, WVTL…TIML, WLNI…GWIM, ILLS…LAYY, IISI…QLYM, AKLI…IVTI, and MFKA…ISRI.

Belongs to the UbiA prenyltransferase family. Protoheme IX farnesyltransferase subfamily.

It is found in the cell membrane. The catalysed reaction is heme b + (2E,6E)-farnesyl diphosphate + H2O = Fe(II)-heme o + diphosphate. Its pathway is porphyrin-containing compound metabolism; heme O biosynthesis; heme O from protoheme: step 1/1. In terms of biological role, converts heme B (protoheme IX) to heme O by substitution of the vinyl group on carbon 2 of heme B porphyrin ring with a hydroxyethyl farnesyl side group. The chain is Protoheme IX farnesyltransferase from Caldivirga maquilingensis (strain ATCC 700844 / DSM 13496 / JCM 10307 / IC-167).